Consider the following 124-residue polypeptide: Putative outer membrane protein TC_0858 (124 aa).

Positions 1–31 (MGKTKKRKQSITLIEMMVVITLIGIISGALA) are cleaved as a signal peptide.

The protein resides in the cell outer membrane. This Chlamydia muridarum (strain MoPn / Nigg) protein is Putative outer membrane protein TC_0858.